We begin with the raw amino-acid sequence, 69 residues long: MIYKVFFQASTTEVPVREHTDSLYVEAVSERDVRDKLKKHSYNIEFIQPVDGAFLDYERESENFKVLEL.

This sequence belongs to the RNA polymerase subunit epsilon family. As to quaternary structure, RNAP is composed of a core of 2 alpha, a beta and a beta' subunit. The core is associated with a delta subunit, and at least one of epsilon or omega. When a sigma factor is associated with the core the holoenzyme is formed, which can initiate transcription.

The catalysed reaction is RNA(n) + a ribonucleoside 5'-triphosphate = RNA(n+1) + diphosphate. Its function is as follows. A non-essential component of RNA polymerase (RNAP). This Bacillus pumilus (strain SAFR-032) protein is DNA-directed RNA polymerase subunit epsilon.